We begin with the raw amino-acid sequence, 304 residues long: Coenzyme PQQ synthesis protein B (304 aa).

This sequence belongs to the PqqB family.

The protein operates within cofactor biosynthesis; pyrroloquinoline quinone biosynthesis. May be involved in the transport of PQQ or its precursor to the periplasm. The chain is Coenzyme PQQ synthesis protein B from Azoarcus sp. (strain BH72).